A 370-amino-acid chain; its full sequence is Uroporphyrinogen decarboxylase (370 aa).

Substrate is bound by residues 29-33 (RQAGR), Asp79, Tyr155, Ser210, and His342.

Belongs to the uroporphyrinogen decarboxylase family. Homodimer.

The protein resides in the cytoplasm. The enzyme catalyses uroporphyrinogen III + 4 H(+) = coproporphyrinogen III + 4 CO2. Its pathway is porphyrin-containing compound metabolism; protoporphyrin-IX biosynthesis; coproporphyrinogen-III from 5-aminolevulinate: step 4/4. Catalyzes the decarboxylation of four acetate groups of uroporphyrinogen-III to yield coproporphyrinogen-III. This is Uroporphyrinogen decarboxylase from Acidovorax ebreus (strain TPSY) (Diaphorobacter sp. (strain TPSY)).